The following is a 199-amino-acid chain: Glycerol-3-phosphate acyltransferase (199 aa).

Helical transmembrane passes span 3 to 23 (IKIL…AYIV), 55 to 75 (VITL…ATFI), 79 to 99 (FSYS…TIFL), 113 to 133 (VFFA…GLAF), and 155 to 175 (YFLG…LLII).

The protein belongs to the PlsY family. In terms of assembly, probably interacts with PlsX.

The protein resides in the cell inner membrane. It carries out the reaction an acyl phosphate + sn-glycerol 3-phosphate = a 1-acyl-sn-glycero-3-phosphate + phosphate. The protein operates within lipid metabolism; phospholipid metabolism. In terms of biological role, catalyzes the transfer of an acyl group from acyl-phosphate (acyl-PO(4)) to glycerol-3-phosphate (G3P) to form lysophosphatidic acid (LPA). This enzyme utilizes acyl-phosphate as fatty acyl donor, but not acyl-CoA or acyl-ACP. This Endomicrobium trichonymphae protein is Glycerol-3-phosphate acyltransferase.